The primary structure comprises 898 residues: Phosphoenolpyruvate carboxylase (898 aa).

Catalysis depends on residues His134 and Lys564.

Belongs to the PEPCase type 1 family. Requires Mg(2+) as cofactor.

It carries out the reaction oxaloacetate + phosphate = phosphoenolpyruvate + hydrogencarbonate. Its function is as follows. Forms oxaloacetate, a four-carbon dicarboxylic acid source for the tricarboxylic acid cycle. In Chromobacterium violaceum (strain ATCC 12472 / DSM 30191 / JCM 1249 / CCUG 213 / NBRC 12614 / NCIMB 9131 / NCTC 9757 / MK), this protein is Phosphoenolpyruvate carboxylase.